The chain runs to 242 residues: Small ribosomal subunit protein uS5 (242 aa).

A compositionally biased stretch (polar residues) spans 1 to 14 (MADENSTGPGNQPE). The interval 1–65 (MADENSTGPG…DRRPRDEDGG (65 aa)) is disordered. A compositionally biased stretch (basic and acidic residues) spans 41–65 (DGGRGGRDGGRGRRDDRRPRDEDGG). The S5 DRBM domain occupies 68–131 (LIEKLVHINR…AAAKKAMIRV (64 aa)). A disordered region spans residues 204-242 (EQTSPKSVAQRRGKKVSDLIKRGGASDRAAEAEAAAVTE). Residues 218–234 (KVSDLIKRGGASDRAAE) are compositionally biased toward basic and acidic residues.

Belongs to the universal ribosomal protein uS5 family. As to quaternary structure, part of the 30S ribosomal subunit. Contacts proteins S4 and S8.

In terms of biological role, with S4 and S12 plays an important role in translational accuracy. Functionally, located at the back of the 30S subunit body where it stabilizes the conformation of the head with respect to the body. This Sphingopyxis alaskensis (strain DSM 13593 / LMG 18877 / RB2256) (Sphingomonas alaskensis) protein is Small ribosomal subunit protein uS5.